Reading from the N-terminus, the 457-residue chain is tRNA-2-methylthio-N(6)-dimethylallyladenosine synthase (457 aa).

An MTTase N-terminal domain is found at 3 to 120; the sequence is KKVYIKTFGC…LPQMIDQRRA (118 aa). Residues C12, C49, C83, C157, C161, and C164 each contribute to the [4Fe-4S] cluster site. Positions 143–377 constitute a Radical SAM core domain; sequence RVEGPSAFVS…QATIEENVAR (235 aa). One can recognise a TRAM domain in the interval 380 to 447; that stretch reads RSMVGKVERI…PHSLRGELLL (68 aa).

This sequence belongs to the methylthiotransferase family. MiaB subfamily. As to quaternary structure, monomer. [4Fe-4S] cluster is required as a cofactor.

It localises to the cytoplasm. The catalysed reaction is N(6)-dimethylallyladenosine(37) in tRNA + (sulfur carrier)-SH + AH2 + 2 S-adenosyl-L-methionine = 2-methylsulfanyl-N(6)-dimethylallyladenosine(37) in tRNA + (sulfur carrier)-H + 5'-deoxyadenosine + L-methionine + A + S-adenosyl-L-homocysteine + 2 H(+). Functionally, catalyzes the methylthiolation of N6-(dimethylallyl)adenosine (i(6)A), leading to the formation of 2-methylthio-N6-(dimethylallyl)adenosine (ms(2)i(6)A) at position 37 in tRNAs that read codons beginning with uridine. In Burkholderia ambifaria (strain MC40-6), this protein is tRNA-2-methylthio-N(6)-dimethylallyladenosine synthase.